The following is a 103-amino-acid chain: Putative inactive recombination-promoting nuclease-like protein YjiP (103 aa).

The protein belongs to the Rpn/YhgA-like nuclease family.

Functionally, this pseudogene is the N-terminal fragment of low activity DNA endonuclease RpnD which probably yields 3'-hydroxyl ends. The intact protein can be seen in this entry (AC B7NGZ6). Expression of the repaired protein increases the frequency of recA-independent recombination, but also decreases viability probably via DNA damage; in a RecA strain expression has no effect on viability but does induce the SOS repair response. May play a role in horizontal gene transfer. The chain is Putative inactive recombination-promoting nuclease-like protein YjiP (yjiP) from Escherichia coli (strain K12).